A 225-amino-acid chain; its full sequence is Insulin-induced gene 2 protein (225 aa).

The Cytoplasmic segment spans residues 1-28 (MAEGETKSPGPKKCGPYISSVTSQSVNL). A helical membrane pass occupies residues 29–51 (MIRGVVLFFIGVFLALVLNLLQI). Topologically, residues 52 to 70 (QRNVTLFPPDVIASIFSSA) are lumenal. The chain crosses the membrane as a helical span at residues 71 to 88 (WWVPPCCGTASAVIGLLY). Residues 89-103 (PCIDRHLGEPHKFKR) lie on the Cytoplasmic side of the membrane. Residues 104 to 126 (EWSSVMRCVAVFVGINHASAKVD) traverse the membrane as a helical segment. Residues 127–129 (FDN) lie on the Lumenal side of the membrane. A helical membrane pass occupies residues 130-148 (NIQLSLTLAALSIGLWWTF). At 149-153 (DRSRS) the chain is on the cytoplasmic side. Phosphoserine is present on S151. Residues 154–175 (GFGLGVGIAFLATLVTQLLVYN) form a helical membrane-spanning segment. At 176 to 189 (GVYQYTSPDFLYVR) the chain is on the lumenal side. Residues 190–207 (SWLPCIFFAGGITMGNIG) traverse the membrane as a helical segment. At 208 to 225 (RQLAMYECKVIAEKSHQE) the chain is on the cytoplasmic side. C215 carries the post-translational modification Cysteine sulfenic acid (-SOH); alternate. A Glycyl cysteine thioester (Cys-Gly) (interchain with G-Cter in ubiquitin); alternate cross-link involves residue C215. Residues 219-225 (AEKSHQE) carry the KxHxx motif.

This sequence belongs to the INSIG family. As to quaternary structure, interacts with SCAP; interaction is direct and only takes place in the presence of sterols; it prevents interaction between SCAP and the coat protein complex II (COPII). Associates with the SCAP-SREBP complex (composed of SCAP and SREBF1/SREBP1 or SREBF2/SREBP2); association is mediated via its interaction with SCAP and only takes place in the presence of sterols. Interacts with RNF139. Interacts with RNF145. In terms of processing, phosphorylation at Ser-151 by PCK1 reduces binding to oxysterol, disrupting the interaction between INSIG2 and SCAP, thereby promoting nuclear translocation of SREBP proteins (SREBF1/SREBP1 or SREBF2/SREBP2) and subsequent transcription of downstream lipogenesis-related genes. Post-translationally, polyubiquitinated by AMFR/gp78 at Cys-215 in some tissues such as adipose tissues, undifferentiated myoblasts and liver, leading to its degradation. In differentiated myotubes, Cys-215 oxidation prevents ubiquitination at the same site, resulting in protein stabilization. Oxidized at Cys-215 in differentiated myotubes, preventing ubiquitination at the same site, and resulting in protein stabilization.

It is found in the endoplasmic reticulum membrane. Its function is as follows. Oxysterol-binding protein that mediates feedback control of cholesterol synthesis by controlling both endoplasmic reticulum to Golgi transport of SCAP and degradation of HMGCR. Acts as a negative regulator of cholesterol biosynthesis by mediating the retention of the SCAP-SREBP complex in the endoplasmic reticulum, thereby blocking the processing of sterol regulatory element-binding proteins (SREBPs) SREBF1/SREBP1 and SREBF2/SREBP2. Binds oxysterol, including 22-hydroxycholesterol, 24-hydroxycholesterol, 25-hydroxycholesterol and 27-hydroxycholesterol, regulating interaction with SCAP and retention of the SCAP-SREBP complex in the endoplasmic reticulum. In presence of oxysterol, interacts with SCAP, retaining the SCAP-SREBP complex in the endoplasmic reticulum, thereby preventing SCAP from escorting SREBF1/SREBP1 and SREBF2/SREBP2 to the Golgi. Sterol deprivation or phosphorylation by PCK1 reduce oxysterol-binding, disrupting the interaction between INSIG2 and SCAP, thereby promoting Golgi transport of the SCAP-SREBP complex, followed by processing and nuclear translocation of SREBF1/SREBP1 and SREBF2/SREBP2. Also regulates cholesterol synthesis by regulating degradation of HMGCR: initiates the sterol-mediated ubiquitin-mediated endoplasmic reticulum-associated degradation (ERAD) of HMGCR via recruitment of the reductase to the ubiquitin ligase RNF139. The polypeptide is Insulin-induced gene 2 protein (Sus scrofa (Pig)).